We begin with the raw amino-acid sequence, 2055 residues long: Dedicator of cytokinesis protein 9 (2055 aa).

Residues S178 and S181 each carry the phosphoserine modification. A PH domain is found at 185 to 292 (GITKHGWLYK…WVTVLNKILQ (108 aa)). A disordered region spans residues 301-326 (EKRNGDPHEDDEQSKLEGSGSGLDSY). S444 and S453 each carry phosphoserine. Residues 649–827 (SNHLYVYPKY…PLLKISTHLV (179 aa)) enclose the C2 DOCK-type domain. Phosphoserine is present on residues S936 and S1244. T1250 carries the post-translational modification Phosphothreonine. Residues 1253–1291 (INSVRNADSRGSLISTDSGNSLPDRNPEKSNSLDKQQQS) form a disordered region. Phosphoserine occurs at positions 1264, 1270, and 1273. The span at 1264–1276 (SLISTDSGNSLPD) shows a compositional bias: polar residues. A DOCKER domain is found at 1614–2055 (KSYASTPELR…LSDIMREQMG (442 aa)). Residues 1679–2055 (DEEASMMEDV…LSDIMREQMG (377 aa)) form an interaction with CDC42 region.

It belongs to the DOCK family. Homodimer. Interacts preferentially with nucleotide-depleted CDC42. In terms of tissue distribution, expressed in lung. Also detected in Peyers patches, thymus, brain and lymph nodes. Expressed in Purkinje cells.

The protein resides in the endomembrane system. Its function is as follows. Guanine nucleotide-exchange factor (GEF) that activates CDC42 by exchanging bound GDP for free GTP. Overexpression induces filopodia formation. The protein is Dedicator of cytokinesis protein 9 of Mus musculus (Mouse).